The chain runs to 349 residues: Nicotinate-nucleotide--dimethylbenzimidazole phosphoribosyltransferase (349 aa).

Glu313 (proton acceptor) is an active-site residue.

It belongs to the CobT family.

It catalyses the reaction 5,6-dimethylbenzimidazole + nicotinate beta-D-ribonucleotide = alpha-ribazole 5'-phosphate + nicotinate + H(+). The protein operates within nucleoside biosynthesis; alpha-ribazole biosynthesis; alpha-ribazole from 5,6-dimethylbenzimidazole: step 1/2. Catalyzes the synthesis of alpha-ribazole-5'-phosphate from nicotinate mononucleotide (NAMN) and 5,6-dimethylbenzimidazole (DMB). The polypeptide is Nicotinate-nucleotide--dimethylbenzimidazole phosphoribosyltransferase (Mycobacterium avium (strain 104)).